A 225-amino-acid polypeptide reads, in one-letter code: Heptaprenylglyceryl phosphate synthase (225 aa).

Lysine 6 provides a ligand contact to sn-glycerol 1-phosphate. Mg(2+) is bound by residues aspartate 8 and threonine 34. Residues 153-158 (YVEYSG), glycine 183, and 203-204 (GN) each bind sn-glycerol 1-phosphate.

This sequence belongs to the GGGP/HepGP synthase family. Group I subfamily. Homodimer. Mg(2+) serves as cofactor.

It catalyses the reaction sn-glycerol 1-phosphate + all-trans-heptaprenyl diphosphate = 3-heptaprenyl-sn-glycero-1-phosphate + diphosphate. Its pathway is membrane lipid metabolism; glycerophospholipid metabolism. Its function is as follows. Prenyltransferase that catalyzes in vivo the transfer of the heptaprenyl moiety of heptaprenyl pyrophosphate (HepPP; 35 carbon atoms) to the C3 hydroxyl of sn-glycerol-1-phosphate (G1P), producing heptaprenylglyceryl phosphate (HepGP). This reaction is an ether-bond-formation step in the biosynthesis of archaea-type G1P-based membrane lipids found in Bacillales. The chain is Heptaprenylglyceryl phosphate synthase from Listeria innocua serovar 6a (strain ATCC BAA-680 / CLIP 11262).